A 1017-amino-acid chain; its full sequence is Rho-GTPase-activating protein LRG1 (1017 aa).

Methionine 1 carries the post-translational modification N-acetylmethionine. LIM zinc-binding domains are found at residues 28–88 and 98–148; these read CARC…LCQY and CHVC…CKYH. One can recognise an LIM zinc-binding 3; truncated domain in the interval 155–184; sequence KRCKGCEFPISDQYIEFPKGEEIHCWHPEC. The 56-residue stretch at 419-474 folds into the LIM zinc-binding 4 domain; the sequence is CAGCNKYIQEECIQFYEHRWHIACFTCSSCHKNINPRSLTDPTFNKEKKKILCSHC. Serine 562 carries the phosphoserine modification. Residues 570–602 form a disordered region; that stretch reads TDLNDPTKQGDSKNLVIQTDDPSSSQQVSTREN. A compositionally biased stretch (polar residues) spans 584 to 602; the sequence is LVIQTDDPSSSQQVSTREN. The Rho-GAP domain maps to 730–953; sequence APLDVLCEKW…YLITHNEEMA (224 aa).

Interacts with CDC42, RHO1 and RHO2.

Its subcellular location is the cytoplasm. The protein resides in the bud. It localises to the bud neck. In terms of biological role, acts in signal transduction. Activates CDC42, RHO1 and RHO2. Negatively regulates 1,3-beta-glucan synthesis. May be responsible for the down-regulation of CDC42 during mating. The protein is Rho-GTPase-activating protein LRG1 (LRG1) of Saccharomyces cerevisiae (strain ATCC 204508 / S288c) (Baker's yeast).